A 264-amino-acid chain; its full sequence is S-adenosylmethionine decarboxylase proenzyme (264 aa).

Ser112 acts as the Schiff-base intermediate with substrate; via pyruvic acid in catalysis. Ser112 is subject to Pyruvic acid (Ser); by autocatalysis. His117 acts as the Proton acceptor; for processing activity in catalysis. The Proton donor; for catalytic activity role is filled by Cys140.

This sequence belongs to the prokaryotic AdoMetDC family. Type 2 subfamily. As to quaternary structure, heterooctamer of four alpha and four beta chains arranged as a tetramer of alpha/beta heterodimers. The cofactor is pyruvate. In terms of processing, is synthesized initially as an inactive proenzyme. Formation of the active enzyme involves a self-maturation process in which the active site pyruvoyl group is generated from an internal serine residue via an autocatalytic post-translational modification. Two non-identical subunits are generated from the proenzyme in this reaction, and the pyruvate is formed at the N-terminus of the alpha chain, which is derived from the carboxyl end of the proenzyme. The post-translation cleavage follows an unusual pathway, termed non-hydrolytic serinolysis, in which the side chain hydroxyl group of the serine supplies its oxygen atom to form the C-terminus of the beta chain, while the remainder of the serine residue undergoes an oxidative deamination to produce ammonia and the pyruvoyl group blocking the N-terminus of the alpha chain.

The enzyme catalyses S-adenosyl-L-methionine + H(+) = S-adenosyl 3-(methylsulfanyl)propylamine + CO2. It participates in amine and polyamine biosynthesis; S-adenosylmethioninamine biosynthesis; S-adenosylmethioninamine from S-adenosyl-L-methionine: step 1/1. Catalyzes the decarboxylation of S-adenosylmethionine to S-adenosylmethioninamine (dcAdoMet), the propylamine donor required for the synthesis of the polyamines spermine and spermidine from the diamine putrescine. In Yersinia enterocolitica serotype O:8 / biotype 1B (strain NCTC 13174 / 8081), this protein is S-adenosylmethionine decarboxylase proenzyme.